A 215-amino-acid polypeptide reads, in one-letter code: Cytochrome c biogenesis ATP-binding export protein CcmA (215 aa).

Residues Leu8–Ala215 enclose the ABC transporter domain. ATP is bound at residue Gly40–Thr47.

It belongs to the ABC transporter superfamily. CcmA exporter (TC 3.A.1.107) family. The complex is composed of two ATP-binding proteins (CcmA) and two transmembrane proteins (CcmB).

It is found in the cell inner membrane. It catalyses the reaction heme b(in) + ATP + H2O = heme b(out) + ADP + phosphate + H(+). Part of the ABC transporter complex CcmAB involved in the biogenesis of c-type cytochromes; once thought to export heme, this seems not to be the case, but its exact role is uncertain. Responsible for energy coupling to the transport system. The sequence is that of Cytochrome c biogenesis ATP-binding export protein CcmA from Pseudomonas syringae pv. syringae (strain B728a).